Reading from the N-terminus, the 615-residue chain is Dehydrogenase str4 (615 aa).

FAD is bound by residues 45–46, 66–67, and 123–126; these read TA, EA, and NGSM. Histidine 552 serves as the catalytic Proton acceptor. FAD contacts are provided by residues alanine 585 and 596–597; that span reads PA.

The protein belongs to the GMC oxidoreductase family. In terms of assembly, homodimer. FAD is required as a cofactor.

It functions in the pathway mycotoxin biosynthesis. Its function is as follows. Dehydrogenase; part of the gene cluster that mediates the biosynthesis of strobilurin A, an antifungal polyketide that contains a key beta-methoxyacrylate toxophore that targets the complex III of the mitochondrial electron transport chain. Strobilurin biosynthesis begins with construction of benzoyl CoA by step-wise elimination of ammonia from phenylalanine by the phenylalanine ammonia-lyase str11, oxygenation by str8 and retro-Claisen reaction to form benzoic acid, which is activated to its CoA thiolester benzoyl CoA by the dedicated CoA ligase str10. Benzoyl CoA forms the starter unit for the highly reducing polyketide synthase stpks1 that produces the polyketide prestrobilutin A. The FAD-dependent oxygenase str9 then catalyzes the key oxidative rearrangement responsible for the creation of the beta-methoxyacrylate toxophore. Str9 performs epoxidation of the 2,3 olefin of prestrobilutin A, followed by Meinwald rearrangement to furnish the aldehyde intermediate. Rapid enolization of the aldehyde intermediate would give the beta-methoxyacrylate skeleton and methylations catalyzed by str2 and str3 complete the synthesis and lead to the production of strobilurin A. The short-chain dehydrogenase stl2 and the dehydrogenase str4 play a role in the shunt pathway leading to the production of bolineol. The cluster encodes no obvious halogenase gene that could be involved in production of strobilurin B, nor any obvious dimethylallyl-transferase that could be involved in the production of strobilurin G. It is possible that unknown proteins encoded in, or near, the cluster (such as str1 or stl1) may form new classes of halogenases or dimethylally-transferases, or that the responsible genes are located elsewhere on the genome. Similarly, proteins encoded by str5/str6 hydrolases appear to have no chemical role in the biosynthesis of strobilurin A. Finally, no obvious self-resistance gene is found within the cluster. In Strobilurus tenacellus, this protein is Dehydrogenase str4.